The chain runs to 226 residues: Enolase-phosphatase E1 (226 aa).

Belongs to the HAD-like hydrolase superfamily. MasA/MtnC family. In terms of assembly, monomer. Mg(2+) serves as cofactor.

It catalyses the reaction 5-methylsulfanyl-2,3-dioxopentyl phosphate + H2O = 1,2-dihydroxy-5-(methylsulfanyl)pent-1-en-3-one + phosphate. It participates in amino-acid biosynthesis; L-methionine biosynthesis via salvage pathway; L-methionine from S-methyl-5-thio-alpha-D-ribose 1-phosphate: step 3/6. Its pathway is amino-acid biosynthesis; L-methionine biosynthesis via salvage pathway; L-methionine from S-methyl-5-thio-alpha-D-ribose 1-phosphate: step 4/6. Bifunctional enzyme that catalyzes the enolization of 2,3-diketo-5-methylthiopentyl-1-phosphate (DK-MTP-1-P) into the intermediate 2-hydroxy-3-keto-5-methylthiopentenyl-1-phosphate (HK-MTPenyl-1-P), which is then dephosphorylated to form the acireductone 1,2-dihydroxy-3-keto-5-methylthiopentene (DHK-MTPene). The protein is Enolase-phosphatase E1 of Shewanella baltica (strain OS155 / ATCC BAA-1091).